Here is a 396-residue protein sequence, read N- to C-terminus: MTQSEKIINLTNHYGAHNYVPLPIVISEAEGVWVKDPEGNTYMDMLSAYSAVNQGHRHPRIIQALKDQADKVTLVSRAFHSDNLGQWYEKICKLAGKDKALPMNTGAEAVETALKAARRWAYDVKGIEPNKAEIIAFNGNFHGRTMAPVSLSSEAEYQRGYGPLLDGFRKVEFGDVNQLKAAINKNTAAILVEPIQGEAGINVPPEGYLKTIRELCDEHQILFIADEIQAGLGRSGKLFATDWDHVKPDVYILGKALGGGVFPISVVLADNEVLDVFTPGSHGSTFGGNPLASAVSIAAIDVIIDEDLPGRSLELGEYFKSELKKIEHPSIKEVRGRGLFIGIELHESARPYCEALKEQGLLCKETHDTVIRFAPPLVITKEELDMALEKIKSVFA.

K255 carries the N6-(pyridoxal phosphate)lysine modification.

The protein belongs to the class-III pyridoxal-phosphate-dependent aminotransferase family. OAT subfamily. The cofactor is pyridoxal 5'-phosphate.

The protein localises to the cytoplasm. It carries out the reaction a 2-oxocarboxylate + L-ornithine = L-glutamate 5-semialdehyde + an L-alpha-amino acid. The protein operates within amino-acid biosynthesis; L-proline biosynthesis; L-glutamate 5-semialdehyde from L-ornithine: step 1/1. Catalyzes the interconversion of ornithine to glutamate semialdehyde. The protein is Ornithine aminotransferase of Staphylococcus epidermidis (strain ATCC 35984 / DSM 28319 / BCRC 17069 / CCUG 31568 / BM 3577 / RP62A).